The sequence spans 123 residues: Small ribosomal subunit protein uS12 (123 aa).

A disordered region spans residues 9 to 28; it reads RNGRKRATKKTTTPALKGAP. Residues 18–27 show a composition bias toward low complexity; sequence KTTTPALKGA. Residue Asp-89 is modified to 3-methylthioaspartic acid.

This sequence belongs to the universal ribosomal protein uS12 family. Part of the 30S ribosomal subunit. Contacts proteins S8 and S17. May interact with IF1 in the 30S initiation complex.

Its function is as follows. With S4 and S5 plays an important role in translational accuracy. In terms of biological role, interacts with and stabilizes bases of the 16S rRNA that are involved in tRNA selection in the A site and with the mRNA backbone. Located at the interface of the 30S and 50S subunits, it traverses the body of the 30S subunit contacting proteins on the other side and probably holding the rRNA structure together. The combined cluster of proteins S8, S12 and S17 appears to hold together the shoulder and platform of the 30S subunit. The polypeptide is Small ribosomal subunit protein uS12 (Desulfosudis oleivorans (strain DSM 6200 / JCM 39069 / Hxd3) (Desulfococcus oleovorans)).